Here is a 153-residue protein sequence, read N- to C-terminus: uncharacterized protein (153 aa).

Disordered stretches follow at residues 30–66 (GPTV…RKGD) and 79–153 (IKEN…DYDD). Residues 45–56 (EDSDGSDKEDEQ) show a composition bias toward acidic residues. Composition is skewed to polar residues over residues 106–116 (GDTTSGVNACS) and 130–144 (GTKS…SSLL).

This is an uncharacterized protein from Xenopus laevis (African clawed frog).